The sequence spans 559 residues: T-complex protein 1 subunit gamma (559 aa).

Cys-369 and Cys-375 are disulfide-bonded. The disordered stretch occupies residues 537-559; the sequence is GGASVTDGNGQEIPETFGDARDG.

Belongs to the TCP-1 chaperonin family. In terms of assembly, heterooligomeric complex of about 850 to 900 kDa that forms two stacked rings, 12 to 16 nm in diameter.

It is found in the cytoplasm. In terms of biological role, molecular chaperone; assists the folding of proteins upon ATP hydrolysis. Known to play a role, in vitro, in the folding of actin and tubulin. The chain is T-complex protein 1 subunit gamma from Tetrahymena pyriformis.